Consider the following 164-residue polypeptide: UPF0178 protein RPB_3201 (164 aa).

This sequence belongs to the UPF0178 family.

The protein is UPF0178 protein RPB_3201 of Rhodopseudomonas palustris (strain HaA2).